A 166-amino-acid polypeptide reads, in one-letter code: HTH-type transcriptional regulator PetP (166 aa).

The HTH marR-type domain occupies Asp-17–Asp-152. The H-T-H motif DNA-binding region spans Val-66–Asp-89.

Necessary for photosynthetic and respiratory growth. The protein is HTH-type transcriptional regulator PetP (petP) of Rhodobacter capsulatus (strain ATCC BAA-309 / NBRC 16581 / SB1003).